The chain runs to 279 residues: Bifunctional protein FolD (279 aa).

NADP(+) contacts are provided by residues 162 to 164 (GRS), S187, and I228.

This sequence belongs to the tetrahydrofolate dehydrogenase/cyclohydrolase family. Homodimer.

The catalysed reaction is (6R)-5,10-methylene-5,6,7,8-tetrahydrofolate + NADP(+) = (6R)-5,10-methenyltetrahydrofolate + NADPH. The enzyme catalyses (6R)-5,10-methenyltetrahydrofolate + H2O = (6R)-10-formyltetrahydrofolate + H(+). It functions in the pathway one-carbon metabolism; tetrahydrofolate interconversion. Its function is as follows. Catalyzes the oxidation of 5,10-methylenetetrahydrofolate to 5,10-methenyltetrahydrofolate and then the hydrolysis of 5,10-methenyltetrahydrofolate to 10-formyltetrahydrofolate. In Acidiphilium cryptum (strain JF-5), this protein is Bifunctional protein FolD.